Reading from the N-terminus, the 419-residue chain is GTPase Obg (419 aa).

The region spanning 1–158 (MIFIDTAEII…RRLRLELKLV (158 aa)) is the Obg domain. The 170-residue stretch at 159–328 (AHVGLVGLPN…LVDVLFELIS (170 aa)) folds into the OBG-type G domain. GTP is bound by residues 165–172 (GLPNAGKS), 190–194 (FTTRS), 211–214 (DVPG), 281–284 (NKID), and 309–311 (SAA). The Mg(2+) site is built by serine 172 and threonine 192. In terms of domain architecture, OCT spans 344-419 (ELPPLPEDFS…VIHDKAFEIL (76 aa)).

It belongs to the TRAFAC class OBG-HflX-like GTPase superfamily. OBG GTPase family. Monomer. It depends on Mg(2+) as a cofactor.

It is found in the cytoplasm. In terms of biological role, an essential GTPase which binds GTP, GDP and possibly (p)ppGpp with moderate affinity, with high nucleotide exchange rates and a fairly low GTP hydrolysis rate. Plays a role in control of the cell cycle, stress response, ribosome biogenesis and in those bacteria that undergo differentiation, in morphogenesis control. In Coprothermobacter proteolyticus (strain ATCC 35245 / DSM 5265 / OCM 4 / BT), this protein is GTPase Obg.